The primary structure comprises 306 residues: N-acetylmuramic acid 6-phosphate etherase (306 aa).

The SIS domain occupies 62-225 (IAQAFQNGGR…TTASMIRIGK (164 aa)). The Proton donor role is filled by glutamate 90. Residue glutamate 121 is part of the active site.

It belongs to the GCKR-like family. MurNAc-6-P etherase subfamily. In terms of assembly, homodimer.

It catalyses the reaction N-acetyl-D-muramate 6-phosphate + H2O = N-acetyl-D-glucosamine 6-phosphate + (R)-lactate. It functions in the pathway amino-sugar metabolism; 1,6-anhydro-N-acetylmuramate degradation. The protein operates within amino-sugar metabolism; N-acetylmuramate degradation. Its pathway is cell wall biogenesis; peptidoglycan recycling. Its function is as follows. Specifically catalyzes the cleavage of the D-lactyl ether substituent of MurNAc 6-phosphate, producing GlcNAc 6-phosphate and D-lactate. Together with AnmK, is also required for the utilization of anhydro-N-acetylmuramic acid (anhMurNAc) either imported from the medium or derived from its own cell wall murein, and thus plays a role in cell wall recycling. The protein is N-acetylmuramic acid 6-phosphate etherase of Vibrio atlanticus (strain LGP32) (Vibrio splendidus (strain Mel32)).